A 387-amino-acid chain; its full sequence is MKWLLLLGLLALSECIVHKVPLVRKKSLRKNLIEKGLLQDYLKTHTPNPATKYFPKETFATVSTESMENYLDAEYFGTISIGTPPQDFTVIFDTGSSNLWVPSTYCSSLACALHKRFNPEDSSTYQGTSETLSITYGTGSMTGILGYDTVKVGSIEDTNQIFGLSKTEPSLTFLFAPFDGILGLAYPSISSSDATPVFDNMWNEGLVSQDLFSVYLSSDDEKGSLVMFGGIDSSYYTGSLNWVPVSYEGYWQITMDSVSINGETIACADSCQAIVDTGTSLLTGPTSAISNIQSYIGASKNLLGENVISCSAIDSLPDIVFTINGIQYPLPASAYILKEDDDCTSGLEGMNVDTYTGELWILGDVFIRQYFTVFDRANNQLGLAAAV.

Residues 1–15 form the signal peptide; it reads MKWLLLLGLLALSEC. The propeptide at 16–59 is activation peptide; it reads IVHKVPLVRKKSLRKNLIEKGLLQDYLKTHTPNPATKYFPKETF. The region spanning 75–384 is the Peptidase A1 domain; sequence YFGTISIGTP…DRANNQLGLA (310 aa). Residue Asp-93 is part of the active site. Cys-106 and Cys-111 form a disulfide bridge. Phosphoserine is present on Ser-129. Cys-267 and Cys-271 are joined by a disulfide. Residue Asp-276 is part of the active site. Cys-310 and Cys-343 are oxidised to a cystine.

The protein belongs to the peptidase A1 family.

It localises to the secreted. It catalyses the reaction Preferential cleavage: hydrophobic, preferably aromatic, residues in P1 and P1' positions. Cleaves 1-Phe-|-Val-2, 4-Gln-|-His-5, 13-Glu-|-Ala-14, 14-Ala-|-Leu-15, 15-Leu-|-Tyr-16, 16-Tyr-|-Leu-17, 23-Gly-|-Phe-24, 24-Phe-|-Phe-25 and 25-Phe-|-Tyr-26 bonds in the B chain of insulin.. In terms of biological role, shows particularly broad specificity; although bonds involving phenylalanine and leucine are preferred, many others are also cleaved to some extent. The protein is Pepsin II-2/3 of Oryctolagus cuniculus (Rabbit).